The chain runs to 131 residues: Small ribosomal subunit protein uS9 (131 aa).

It belongs to the universal ribosomal protein uS9 family.

This chain is Small ribosomal subunit protein uS9, found in Haemophilus ducreyi (strain 35000HP / ATCC 700724).